Here is a 777-residue protein sequence, read N- to C-terminus: ATPase ARSA1 (777 aa).

Residue 110–117 (KGGVGKTS) coordinates ATP. Residue D139 is part of the active site. ATP is bound by residues N372 and 454–461 (KGGVGKTS). The active site involves D483. N712 lines the ATP pocket.

This sequence belongs to the arsA ATPase family. Monomer. Interacts with TOC34.

The protein resides in the cytoplasm. It localises to the cytosol. In terms of biological role, ATPase required for the post-translational delivery of tail-anchored (TA) proteins to the chloroplast. Required for the accumulation of TOC34, an essential component of the outer chloroplast membrane translocon (TOC) complex. Recognizes and selectively binds the transmembrane domain of TA proteins in the cytosol. This complex then targets to chloroplast, where the tail-anchored protein is released for insertion. This process is regulated by ATP binding and hydrolysis. The sequence is that of ATPase ARSA1 from Chlamydomonas reinhardtii (Chlamydomonas smithii).